We begin with the raw amino-acid sequence, 430 residues long: Vitamin B6 salvage pathway transcriptional repressor PtsJ (430 aa).

The HTH gntR-type domain occupies 4–72 (GKTANEIFDS…GRNGTVIKGS (69 aa)). The H-T-H motif DNA-binding region spans 32–51 (VRELASELKVNRNTVAAAYK). The segment at 70–95 (KGSPSPVALEGGDPHTPLHDLSGGNP) is disordered. Position 282 is an N6-(pyridoxal phosphate)lysine (lysine 282).

In the C-terminal section; belongs to the class-I pyridoxal-phosphate-dependent aminotransferase family. As to quaternary structure, homodimer in both apo- and holo-forms.

Its function is as follows. Acts as a transcriptional repressor of the pdxK gene, encoding a pyridoxal kinase involved in the vitamin B6 salvage pathway. Also represses transcription of its own gene. Binds to the ptsJ-pdxK intergenic region, but does not bind pdxY and pdxH promoters. Among all six B6 vitamers, only pyridoxal 5'-phosphate (PLP) clearly binds to the protein and acts as an effector molecule for PtsJ, inducing a protein conformational change that increases affinity for DNA. Thus, PLP stabilizes protein-DNA interactions, reinforcing repression. This is Vitamin B6 salvage pathway transcriptional repressor PtsJ from Salmonella typhimurium (strain LT2 / SGSC1412 / ATCC 700720).